The primary structure comprises 146 residues: Large ribosomal subunit protein uL15 (146 aa).

Residues Met-1–Arg-13 show a composition bias toward basic and acidic residues. A disordered region spans residues Met-1–Tyr-58. 2 stretches are compositionally biased toward gly residues: residues Arg-21–Ala-31 and Ser-42–Gly-52.

It belongs to the universal ribosomal protein uL15 family. As to quaternary structure, part of the 50S ribosomal subunit.

Its function is as follows. Binds to the 23S rRNA. This Shouchella clausii (strain KSM-K16) (Alkalihalobacillus clausii) protein is Large ribosomal subunit protein uL15.